A 546-amino-acid chain; its full sequence is Cytochrome P450 monooxygenase 219 (546 aa).

The first 22 residues, Met1–Arg22, serve as a signal peptide directing secretion. N-linked (GlcNAc...) asparagine glycosylation is found at Asn367 and Asn441. Heme is bound at residue Cys487.

This sequence belongs to the cytochrome P450 family. It depends on heme as a cofactor.

The protein operates within secondary metabolite biosynthesis. Functionally, cytochrome P450 monooxygenase that is able to use testosterone, anthracene, carbazole, pyrene, phenanthrene and trans-stilbene as substrates for oxidation. These multifunctional properties against a series of polycyclic aromatic hydrocarbons (PAHs) suggest that CYP219 would play important roles, at least in part, in fungal metabolic systems involved in xenobiotic detoxification. The protein is Cytochrome P450 monooxygenase 219 of Postia placenta (strain ATCC 44394 / Madison 698-R) (Brown rot fungus).